The following is a 124-amino-acid chain: Kinocilin (124 aa).

2 helical membrane passes run 13–33 (LQLACVALGLVAGSIIIGVSV) and 40–60 (VGGIFLGAAGLGLLIFAYPFL). The disordered stretch occupies residues 80–124 (PNSGPDHGEGRSSNNSNKEGARSGLSTVTRTLEKLKPGGRGTEEG). Residues 90–109 (RSSNNSNKEGARSGLSTVTR) are compositionally biased toward polar residues. The span at 110–124 (TLEKLKPGGRGTEEG) shows a compositional bias: basic and acidic residues.

In terms of tissue distribution, preferentially expressed in the inner ear and testis. Localizes mainly in the kinocilium of sensory cells in the inner ear. Also present in the manchette of the spermatids, a transient structure enriched in interconnected microtubules (at protein level).

Its subcellular location is the membrane. May play a role in stabilizing dense microtubular networks or in vesicular trafficking. This chain is Kinocilin (Kncn), found in Mus musculus (Mouse).